A 693-amino-acid polypeptide reads, in one-letter code: Glycine--tRNA ligase beta subunit (693 aa).

Belongs to the class-II aminoacyl-tRNA synthetase family. In terms of assembly, tetramer of two alpha and two beta subunits.

It localises to the cytoplasm. The catalysed reaction is tRNA(Gly) + glycine + ATP = glycyl-tRNA(Gly) + AMP + diphosphate. The protein is Glycine--tRNA ligase beta subunit of Ligilactobacillus salivarius (strain UCC118) (Lactobacillus salivarius).